Reading from the N-terminus, the 347-residue chain is D-alanine--D-alanine ligase (347 aa).

Residues lysine 131 to aspartate 333 enclose the ATP-grasp domain. Glutamate 161–glutamate 216 lines the ATP pocket. The Mg(2+) site is built by aspartate 287, glutamate 300, and asparagine 302.

The protein belongs to the D-alanine--D-alanine ligase family. Mg(2+) serves as cofactor. Requires Mn(2+) as cofactor.

Its subcellular location is the cytoplasm. The catalysed reaction is 2 D-alanine + ATP = D-alanyl-D-alanine + ADP + phosphate + H(+). The protein operates within cell wall biogenesis; peptidoglycan biosynthesis. Its function is as follows. Cell wall formation. This Streptococcus pneumoniae (strain Taiwan19F-14) protein is D-alanine--D-alanine ligase.